Consider the following 654-residue polypeptide: Dystrobrevin beta (654 aa).

Residue M1 is modified to N-acetylmethionine. Residues T11, T69, T179, and T212 each carry the phosphothreonine modification. A ZZ-type zinc finger spans residues 238-294 (FHPVECSYCHCESMMGFRYRCQQCHNYQLCQNCFWRGHAGGPHSNQHQMKELSSWKS). C243, C246, C258, C261, C267, C270, H280, and H284 together coordinate Zn(2+). At S394 the chain carries Phosphoserine. Residues 399–448 (DEEHRLIARYAARLAAEAGNMTRPPTDASFNFDANKQQRQLIAELENKNR) form a syntrophin-binding region region. T424 bears the Phosphothreonine mark. Positions 429 to 519 (NFDANKQQRQ…LEGLMKLLKA (91 aa)) form a coiled coil. The tract at residues 520 to 562 (QATGSPHTSPTHGGGRSMPMPVRSTSAGSTPTHGPQDSLSGVG) is disordered. 2 stretches are compositionally biased toward polar residues: residues 521-530 (ATGSPHTSPT) and 542-558 (RSTSAGSTPTHGPQDSL).

Belongs to the dystrophin family. Dystrobrevin subfamily. As to quaternary structure, interacts with dystrophin short form DP71 and syntrophins SNTG1 and SNTG2. Binds DTNBP1. Forms a specific complex composed of DMD, SNTB2 and SNTA1 in neuron; the interaction with SNTB2 and SNTA1 is DMD independent. Interacts with UTRN and dystrophin short form DP71 in the kidney and liver. Interacts with SNTB1, SNTB2 and SNTA1 in kidney and liver. Interacts with KIF5A. Interacts with HMG20A and HMG20B. Interacts with OLFM1. Interacts with PRKAR2B and PRKAR1A. In terms of processing, phosphorylated by PKA. Phosphorylation at Thr-11 alters the interaction with KIF5A. In terms of tissue distribution, expressed in neurons. In the isocortex, expressed most prominently in the somata (including the nuclei) and the dendrites of the pyramidal cells. Expressed in the hippocampus CA1, CA2, and CA3 neurons, namely in the initial segments of dendrites. Expressed in the Purkinje cells, molecular layer interneurons, and granule cells of cerebellum. Expressed in axon fascicles associated with the spinal trigeminal tract and in the internal capsule in the brainstem.

It localises to the cytoplasm. Its subcellular location is the postsynaptic density. The protein localises to the cell projection. It is found in the dendrite. The protein resides in the basal cell membrane. It localises to the postsynapse. Its subcellular location is the nucleus. In terms of biological role, scaffolding protein that assembles DMD and SNTA1 molecules to the basal membrane of kidney cells and liver sinusoids. May function as a repressor of the SYN1 promoter through the binding of repressor element-1 (RE-1), in turn regulates SYN1 expression and may be involved in cell proliferation regulation during the early phase of neural differentiation. May be required for proper maturation and function of a subset of inhibitory synapses. The chain is Dystrobrevin beta from Rattus norvegicus (Rat).